Here is a 51-residue protein sequence, read N- to C-terminus: MDKAKPDEYDQKCLETLYQYIHSVMKNSFSRSSGLPLGKMRRILSCLPKES.

This is an uncharacterized protein from Bacillus subtilis (strain 168).